A 152-amino-acid polypeptide reads, in one-letter code: UPF0225 protein Ent638_2310 (152 aa).

It belongs to the UPF0225 family.

The protein is UPF0225 protein Ent638_2310 of Enterobacter sp. (strain 638).